A 218-amino-acid chain; its full sequence is Tegument protein UL51 homolog (218 aa).

Residue Cys-11 is the site of S-palmitoyl cysteine; by host attachment. Positions Ala-199–Thr-218 are disordered.

This sequence belongs to the herpesviridae UL51 family. Homodimer. Interacts with BBRF2; the BBRF2-BSRF1 complexes oligomerize which might play a role in tethering the viral nucleocapsids to the host Golgi membrane during secondary envelopment. Interacts with BGLF3.5. Interacts with BALF1. Interacts with glycoprotein gB. Interacts with glycoprotein heterodimer gH/gL. In terms of processing, phosphorylated. Post-translationally, palmitoylation is necessary for Golgi localization.

It is found in the host cytoplasm. The protein resides in the virion. It localises to the host Golgi apparatus. Plays several roles during the time course of infection, including egress of virus particles from the perinuclear space and secondary envelopment of cytoplasmic capsids that bud into specific trans-Golgi network (TGN)-derived membranes. The protein is Tegument protein UL51 homolog of Homo sapiens (Human).